The chain runs to 82 residues: Sulfur carrier protein TusA (82 aa).

Residue C19 is the Cysteine persulfide intermediate of the active site.

It belongs to the sulfur carrier protein TusA family.

The protein resides in the cytoplasm. Its function is as follows. Sulfur carrier protein which probably makes part of a sulfur-relay system. This Photobacterium profundum (strain SS9) protein is Sulfur carrier protein TusA.